A 296-amino-acid chain; its full sequence is D-alanine--D-alanine ligase (296 aa).

The ATP-grasp domain maps to 99-292; the sequence is TYRVLDGYVN…FEELVDAIIQ (194 aa). An ATP-binding site is contributed by 125-176; that stretch reads GFPCVIKPRKEGSSIGVHICDNSNQLYNDLSEELKKYNEMMIQRYIEGRELT. Mg(2+) is bound by residues Asp247, Glu259, and Asn261.

The protein belongs to the D-alanine--D-alanine ligase family. The cofactor is Mg(2+). Mn(2+) serves as cofactor.

It localises to the cytoplasm. It carries out the reaction 2 D-alanine + ATP = D-alanyl-D-alanine + ADP + phosphate + H(+). The protein operates within cell wall biogenesis; peptidoglycan biosynthesis. In terms of biological role, cell wall formation. The sequence is that of D-alanine--D-alanine ligase from Pseudothermotoga lettingae (strain ATCC BAA-301 / DSM 14385 / NBRC 107922 / TMO) (Thermotoga lettingae).